The primary structure comprises 544 residues: Sphingosine-1-phosphate lyase (544 aa).

Over 1-29 the chain is Lumenal; that stretch reads MDSFSYSSMKSMLIQARGSLNSRLSEFEP. A helical; Signal-anchor for type III membrane protein transmembrane segment spans residues 30–50; sequence LVLLLVPLVSLFLAQIIGSVF. The Cytoplasmic segment spans residues 51-544; the sequence is GVVHEKGLKA…LLVSFMDSQY (494 aa). At Lys-349 the chain carries N6-(pyridoxal phosphate)lysine.

Belongs to the group II decarboxylase family. Sphingosine-1-phosphate lyase subfamily. Pyridoxal 5'-phosphate is required as a cofactor. Expressed in the peripheral parts of leaves and the bases of trichomes.

It localises to the endoplasmic reticulum membrane. It catalyses the reaction sphinganine 1-phosphate = hexadecanal + phosphoethanolamine. Its pathway is lipid metabolism; sphingolipid metabolism. Functionally, cleaves phosphorylated sphingoid bases (PSBs), such as sphingosine-1-phosphate, into fatty aldehydes and phosphoethanolamine. May play a minor role in maintenance of sphingolipid metabolism during normal plant development and growth, but be required for maintaining sphingoid long chain bases (LCB) and their phosphorylated derivatives (LCB-P) levels when sphingolipid metabolism is perturbed. May play a role in dehydration stress. The chain is Sphingosine-1-phosphate lyase (DPL1) from Arabidopsis thaliana (Mouse-ear cress).